We begin with the raw amino-acid sequence, 418 residues long: Serine hydroxymethyltransferase (418 aa).

Residues Leu121 and 125-127 (GHL) each bind (6S)-5,6,7,8-tetrahydrofolate. Lys230 is subject to N6-(pyridoxal phosphate)lysine. Residue 355-357 (SPF) coordinates (6S)-5,6,7,8-tetrahydrofolate.

This sequence belongs to the SHMT family. Homodimer. The cofactor is pyridoxal 5'-phosphate.

It is found in the cytoplasm. The catalysed reaction is (6R)-5,10-methylene-5,6,7,8-tetrahydrofolate + glycine + H2O = (6S)-5,6,7,8-tetrahydrofolate + L-serine. The protein operates within one-carbon metabolism; tetrahydrofolate interconversion. It functions in the pathway amino-acid biosynthesis; glycine biosynthesis; glycine from L-serine: step 1/1. Catalyzes the reversible interconversion of serine and glycine with tetrahydrofolate (THF) serving as the one-carbon carrier. This reaction serves as the major source of one-carbon groups required for the biosynthesis of purines, thymidylate, methionine, and other important biomolecules. Also exhibits THF-independent aldolase activity toward beta-hydroxyamino acids, producing glycine and aldehydes, via a retro-aldol mechanism. The chain is Serine hydroxymethyltransferase from Alcanivorax borkumensis (strain ATCC 700651 / DSM 11573 / NCIMB 13689 / SK2).